A 341-amino-acid polypeptide reads, in one-letter code: L-threonine 3-dehydrogenase (341 aa).

Position 38 (C38) interacts with Zn(2+). Catalysis depends on charge relay system residues T40 and H43. 6 residues coordinate Zn(2+): H63, E64, C93, C96, C99, and C107. NAD(+) is bound by residues I175, D195, R200, 262-264 (LGI), and 286-287 (IY).

The protein belongs to the zinc-containing alcohol dehydrogenase family. In terms of assembly, homotetramer. It depends on Zn(2+) as a cofactor.

The protein resides in the cytoplasm. The catalysed reaction is L-threonine + NAD(+) = (2S)-2-amino-3-oxobutanoate + NADH + H(+). It functions in the pathway amino-acid degradation; L-threonine degradation via oxydo-reductase pathway; glycine from L-threonine: step 1/2. Functionally, catalyzes the NAD(+)-dependent oxidation of L-threonine to 2-amino-3-ketobutyrate. In Shewanella baltica (strain OS185), this protein is L-threonine 3-dehydrogenase.